The chain runs to 853 residues: Transcription factor macR (853 aa).

Residues 18–45 (CIVCRRRKVRCGREQPECANCVRMKENC) constitute a DNA-binding region (zn(2)-C6 fungal-type). Disordered regions lie at residues 54-122 (ESTG…PYPT), 138-166 (ANAPQINGSSTTTRDPSPAPSTSLFPTPS), 734-775 (ASDL…AGNK), and 833-853 (LGSQSTASGRRGLPDGLDFPG). 3 stretches are compositionally biased toward polar residues: residues 104 to 116 (PQVSANASPSPQR), 141 to 163 (PQINGSSTTTRDPSPAPSTSLFP), and 738 to 752 (RATSDQPSSDVSSTT).

Its subcellular location is the nucleus. Functionally, transcription factor that regulates the expression of the gene cluster that mediates the biosynthesis of macrophorins, isoprenoid epoxycyclohexenones containing cyclized drimane moieties. The chain is Transcription factor macR from Penicillium terrestre.